Reading from the N-terminus, the 522-residue chain is FAD-dependent monooxygenase fsr3 (522 aa).

The disordered stretch occupies residues 1-27; it reads MKNTQTNGTHPIIDKKPNGTLNGDHQE. Arg-164 is an FAD binding site. Arg-245 is a catalytic residue. The FAD site is built by Asp-369 and Ala-382.

This sequence belongs to the paxM FAD-dependent monooxygenase family. FAD serves as cofactor.

It functions in the pathway polyketide biosynthesis. FAD-dependent monooxygenase; part of the gene cluster that mediates the biosynthesis of fusarubins, highly pigmented naphthoquinones responsible for the coloration of the fruiting bodies. The non-reducing polyketide synthase FSR1 is responsible for the condensation of seven acetyl-CoA units to yield a haptaketide. After rings A and B are formed by aldol-type cyclization, the PKS-derived product is released as 6-O-demethylfusarubinaldehyde. Then, two hydroxyl groups at C-5 and C-10 are incorporated by FSR3, and simultaneously hydroxyl groups at C-6 and C-8 are methylated by FSR2. The aldehyde is, on the one hand, reduced by FSR3 to 8-O-methylfusarubin alcohol, which equilibrates mainly with 8-O-methylfusarubin and only small amounts of 8-O-methylnectriafurone. On the other hand, the aldehyde can be oxidized to form 8-O-methylfusarubinic acid, a reaction driven by FSR3 equilibrating with 8-O-methylfusarubinlactone, finally resulting in 8-O-methylanhydrofusarubinlactol after a further reduction step and loss of water. 8-O-Methylfusarubinic acid can also undergo decarboxylation, resulting in 8-O-methyl-13-hydroxynorjavanicin after another hydroxylation step at C-13. Both steps are most likely also accomplished by FSR3. No enzymatic function has been determined so far for either FSR4 and FSR5. Their deletion does not alter the product spectrum, but the possibility that they catalyze specific enzymatic steps during perithecium development cannot be ruled out. FSR4 might possess a regulatory function in the biosynthesis of fusarubins. This chain is FAD-dependent monooxygenase fsr3, found in Gibberella fujikuroi (strain CBS 195.34 / IMI 58289 / NRRL A-6831) (Bakanae and foot rot disease fungus).